Reading from the N-terminus, the 580-residue chain is Fumarate hydratase class I, aerobic (580 aa).

Positions 105, 224, and 318 each coordinate [4Fe-4S] cluster.

Belongs to the class-I fumarase family. As to quaternary structure, homodimer. [4Fe-4S] cluster is required as a cofactor.

It catalyses the reaction (S)-malate = fumarate + H2O. The catalysed reaction is oxaloacetate = enol-oxaloacetate. Its pathway is carbohydrate metabolism; tricarboxylic acid cycle; (S)-malate from fumarate: step 1/1. Catalyzes the reversible hydration of fumarate to (S)-malate. Functions as an aerobic enzyme in the direction of malate formation as part of the citric acid cycle. Accounts for about 80% of the fumarase activity when the bacteria grow aerobically. To a lesser extent, also displays D-tartrate dehydratase activity in vitro, but is not able to convert (R)-malate, L-tartrate or meso-tartrate. Can also catalyze the isomerization of enol- to keto-oxaloacetate. The polypeptide is Fumarate hydratase class I, aerobic (Salmonella typhimurium (strain LT2 / SGSC1412 / ATCC 700720)).